Reading from the N-terminus, the 230-residue chain is Heptaprenylglyceryl phosphate synthase (230 aa).

Lysine 12 provides a ligand contact to sn-glycerol 1-phosphate. Mg(2+)-binding residues include aspartate 14 and threonine 40. Sn-glycerol 1-phosphate-binding positions include 159-164, glycine 189, and 209-210; these read YIEYSG and GD.

The protein belongs to the GGGP/HepGP synthase family. Group I subfamily. As to quaternary structure, homodimer. Requires Mg(2+) as cofactor.

The enzyme catalyses sn-glycerol 1-phosphate + all-trans-heptaprenyl diphosphate = 3-heptaprenyl-sn-glycero-1-phosphate + diphosphate. It participates in membrane lipid metabolism; glycerophospholipid metabolism. Prenyltransferase that catalyzes in vivo the transfer of the heptaprenyl moiety of heptaprenyl pyrophosphate (HepPP; 35 carbon atoms) to the C3 hydroxyl of sn-glycerol-1-phosphate (G1P), producing heptaprenylglyceryl phosphate (HepGP). This reaction is an ether-bond-formation step in the biosynthesis of archaea-type G1P-based membrane lipids found in Bacillales. The polypeptide is Heptaprenylglyceryl phosphate synthase (Staphylococcus aureus (strain JH1)).